The chain runs to 250 residues: Exotoxin type A (250 aa).

Positions 1 to 30 are cleaved as a signal peptide; sequence MENNKEVLKKMVFFVLMKFLGLTILPKGIC. Cysteine 117 and cysteine 128 are joined by a disulfide.

The protein belongs to the staphylococcal/streptococcal toxin family.

Its function is as follows. Causative agent of the symptoms associated with scarlet fever, have been associated with streptococcal toxic shock-like disease and may play a role in the early events of rheumatic fever. In Streptococcus pyogenes, this protein is Exotoxin type A (speA).